The chain runs to 202 residues: Probable WRKY transcription factor 59 (202 aa).

The WRKY DNA-binding region spans 103 to 168 (DEKVALDDGY…YEGRHNHPSP (66 aa)).

The protein belongs to the WRKY group II-c family.

It is found in the nucleus. Its function is as follows. Transcription factor. Interacts specifically with the W box (5'-(T)TGAC[CT]-3'), a frequently occurring elicitor-responsive cis-acting element. This Arabidopsis thaliana (Mouse-ear cress) protein is Probable WRKY transcription factor 59 (WRKY59).